The following is a 343-amino-acid chain: Anthranilate phosphoribosyltransferase (343 aa).

Residues Gly84, 87–88, Thr92, 94–97, 112–120, and Ser124 contribute to the 5-phospho-alpha-D-ribose 1-diphosphate site; these read GD, NIST, and KHGNRSASS. Anthranilate is bound at residue Gly84. Ser96 lines the Mg(2+) pocket. An anthranilate-binding site is contributed by Asn115. An anthranilate-binding site is contributed by Arg170. Mg(2+) is bound by residues Asp229 and Glu230.

It belongs to the anthranilate phosphoribosyltransferase family. In terms of assembly, homodimer. It depends on Mg(2+) as a cofactor.

The catalysed reaction is N-(5-phospho-beta-D-ribosyl)anthranilate + diphosphate = 5-phospho-alpha-D-ribose 1-diphosphate + anthranilate. Its pathway is amino-acid biosynthesis; L-tryptophan biosynthesis; L-tryptophan from chorismate: step 2/5. Catalyzes the transfer of the phosphoribosyl group of 5-phosphorylribose-1-pyrophosphate (PRPP) to anthranilate to yield N-(5'-phosphoribosyl)-anthranilate (PRA). This chain is Anthranilate phosphoribosyltransferase, found in Bordetella avium (strain 197N).